Consider the following 270-residue polypeptide: Oxidoreductase NAD-binding domain-containing protein 1 (270 aa).

Residues 20–123 (MELFSARVCD…VGGNFYFDPQ (104 aa)) enclose the FAD-binding FR-type domain. 137-142 (GVGINP) contributes to the NAD(+) binding site.

The sequence is that of Oxidoreductase NAD-binding domain-containing protein 1 (oxnad1) from Danio rerio (Zebrafish).